Consider the following 248-residue polypeptide: Adenosylcobinamide-GDP ribazoletransferase (248 aa).

Transmembrane regions (helical) follow at residues 24–44 (EINL…IGAW), 70–90 (IIIT…GLFS), 106–126 (VGAN…SLFL), 134–154 (IGWL…LLFA), 168–188 (IFLG…LVAL), 189–209 (GAFF…FTII), and 228–248 (AGGQ…WGLI).

Belongs to the CobS family. The cofactor is Mg(2+).

Its subcellular location is the cell membrane. The enzyme catalyses alpha-ribazole + adenosylcob(III)inamide-GDP = adenosylcob(III)alamin + GMP + H(+). It catalyses the reaction alpha-ribazole 5'-phosphate + adenosylcob(III)inamide-GDP = adenosylcob(III)alamin 5'-phosphate + GMP + H(+). It functions in the pathway cofactor biosynthesis; adenosylcobalamin biosynthesis; adenosylcobalamin from cob(II)yrinate a,c-diamide: step 7/7. Joins adenosylcobinamide-GDP and alpha-ribazole to generate adenosylcobalamin (Ado-cobalamin). Also synthesizes adenosylcobalamin 5'-phosphate from adenosylcobinamide-GDP and alpha-ribazole 5'-phosphate. In Listeria monocytogenes serotype 4b (strain F2365), this protein is Adenosylcobinamide-GDP ribazoletransferase.